A 137-amino-acid chain; its full sequence is Large ribosomal subunit protein uL16 (137 aa).

Belongs to the universal ribosomal protein uL16 family. As to quaternary structure, part of the 50S ribosomal subunit.

Functionally, binds 23S rRNA and is also seen to make contacts with the A and possibly P site tRNAs. The sequence is that of Large ribosomal subunit protein uL16 from Brucella abortus (strain S19).